The sequence spans 367 residues: METRIRAAQLKGRGGAFPKLGRRAGPAEPDYESEVYEAAAGDAVAVAPAPAAAVEPAELDFGAGEGHHLQHISDREMPEDLALESNPSDHPRASTIFLSKSQTDVREKRKSNHLNHVSPGQLTKKYSSCSTIFLDDSTVSQPNLRTTIKCVTLAIYYHIKNRDANRSLDIFDERSHPLTREKVPEEYFKHDPEHKFIYRFVRTLFSAAQLTAECAIVTLVYLERLLTYAEIDICPTNWKRIVLGAILLASKVWDDQAVWNVDYCQILKDITVEDMNEMERHFLELLQFNINVPASVYAKYYFDLRSLADDNNLNFLFAPLSKERAQNLEAISRLCEDKYKDLCRAAMRRSLSADNFIGIQRSNAILS.

A phosphoserine mark is found at Ser73, Ser111, and Ser118. The 106-residue stretch at 186 to 291 (EYFKHDPEHK…FLELLQFNIN (106 aa)) folds into the Cyclin N-terminal domain. Ser352 carries the post-translational modification Phosphoserine.

The protein belongs to the cyclin family. Cyclin Y subfamily. As to quaternary structure, interacts with CDK16; this interaction mutually increases the stability of CDK16 and CCNYL1 and increases the kinase activity of CDK16. Highly expressed in the testis. Largely restricted to germ cells in the testis.

It localises to the cell membrane. Key regulator of Wnt signaling implicated in various biological processes including male fertility, embryonic neurogenesis and cortex development. Activates the cyclin-dependent kinase CDK16, and promotes sperm maturation. This chain is Cyclin-Y-like protein 1, found in Mus musculus (Mouse).